The chain runs to 550 residues: Hydroxylamine reductase (550 aa).

C3, C6, C18, and C25 together coordinate [2Fe-2S] cluster. Residues H249, E273, C317, C405, C433, C458, E492, and K494 each contribute to the hybrid [4Fe-2O-2S] cluster site. At C405 the chain carries Cysteine persulfide.

The protein belongs to the HCP family. Requires [2Fe-2S] cluster as cofactor. Hybrid [4Fe-2O-2S] cluster is required as a cofactor.

It is found in the cytoplasm. It catalyses the reaction A + NH4(+) + H2O = hydroxylamine + AH2 + H(+). Catalyzes the reduction of hydroxylamine to form NH(3) and H(2)O. The protein is Hydroxylamine reductase of Salmonella choleraesuis (strain SC-B67).